Consider the following 296-residue polypeptide: Chelated iron transport system membrane protein YfeB (296 aa).

Residues 11 to 246 enclose the ABC transporter domain; sequence LVVDNVTVTY…NLEMTFGGVL (236 aa). 44–51 is an ATP binding site; it reads GVNGSGKS. The interval 276–296 is disordered; the sequence is VFYGHTKNDPPAQSQSKEQNS. A compositionally biased stretch (polar residues) spans 286–296; sequence PAQSQSKEQNS.

Belongs to the ABC transporter superfamily.

It is found in the cell inner membrane. Functionally, part of an ATP-driven transport system YfeABCD for chelated iron. This Yersinia pestis protein is Chelated iron transport system membrane protein YfeB (yfeB).